The sequence spans 1007 residues: A disintegrin and metalloproteinase with thrombospondin motifs 1 (1007 aa).

A signal peptide spans 1–20 (MPCCLWAALSLLLAVVGAGA). N-linked (GlcNAc...) asparagine glycosylation is found at Asn130 and Asn228. The Peptidase M12B domain occupies 184-370 (LWLELAIVAD…WSSCSKEQFH (187 aa)). His322 serves as a coordination point for Zn(2+). Positions 322 to 333 (HELAHLLGLTHD) match the Metal-binding motif. Glu323 is a catalytic residue. Zn(2+) is bound by residues His326 and His332. 4 disulfides stabilise this stretch: Cys338-Cys364, Cys494-Cys530, Cys498-Cys536, and Cys509-Cys520. The 56-residue stretch at 482–537 (TPEWGDWEEWSACNADCGYGLRTRTRKCKYRGFVSESACEGAGSQVATCWAGSSCA) folds into the TSP type-1 1 domain. 6 N-linked (GlcNAc...) asparagine glycosylation sites follow: Asn561, Asn610, Asn626, Asn737, Asn777, and Asn865. 2 consecutive TSP type-1 domains span residues 833-899 (CEFV…NRIP) and 900-952 (CPVY…RRCP). 3 disulfides stabilise this stretch: Cys912/Cys946, Cys916/Cys951, and Cys927/Cys935.

Requires Zn(2+) as cofactor.

The protein localises to the secreted. It localises to the extracellular space. The protein resides in the extracellular matrix. Involved in larval molting and metamorphosis. May degrade extracellular matrix (ECM) and basement membrane (BM) during the development of organs to allow degeneration and remodeling of tissues. The chain is A disintegrin and metalloproteinase with thrombospondin motifs 1 from Bombyx mori (Silk moth).